Consider the following 309-residue polypeptide: UDP-N-acetylenolpyruvoylglucosamine reductase (309 aa).

In terms of domain architecture, FAD-binding PCMH-type spans 34-198 (RVGGPAEVMF…VRARLHARPG (165 aa)). R178 is an active-site residue. The active-site Proton donor is the S227. E297 is an active-site residue.

This sequence belongs to the MurB family. The cofactor is FAD.

The protein localises to the cytoplasm. The catalysed reaction is UDP-N-acetyl-alpha-D-muramate + NADP(+) = UDP-N-acetyl-3-O-(1-carboxyvinyl)-alpha-D-glucosamine + NADPH + H(+). It functions in the pathway cell wall biogenesis; peptidoglycan biosynthesis. Cell wall formation. The protein is UDP-N-acetylenolpyruvoylglucosamine reductase of Acidiphilium cryptum (strain JF-5).